A 197-amino-acid chain; its full sequence is Gene 49 protein (197 aa).

Disordered stretches follow at residues 1 to 49 and 114 to 157; these read MRGN…EVRP and FANL…RFCK. Positions 117 to 135 are enriched in gly residues; the sequence is LGGGSKPNSGGGGSGGGGQ. Over residues 136–146 the composition is skewed to low complexity; sequence QHQSRAPQQAQ.

In Mycobacterium phage D29 (Mycobacteriophage D29), this protein is Gene 49 protein (49).